The primary structure comprises 578 residues: Raftlin (578 aa).

Residue Gly2 is the site of N-myristoyl glycine attachment. Residue Cys3 is the site of S-palmitoyl cysteine attachment. The span at Val169–Thr184 shows a compositional bias: polar residues. Disordered stretches follow at residues Val169–Glu271, Phe449–Leu525, and Cys551–Asn578. 3 positions are modified to phosphoserine: Ser183, Ser199, and Ser220. Over residues Glu185–Gly206 the composition is skewed to basic and acidic residues. Over residues Arg457–Leu466 the composition is skewed to basic residues. Positions Ser467–Ser485 are enriched in basic and acidic residues. Residue Ser505 is modified to Phosphoserine. 2 stretches are compositionally biased toward basic and acidic residues: residues Glu506–Glu518 and Pro557–Asn578.

Belongs to the raftlin family. Interacts with TLR4; the interaction occurs in response to lipopolysaccharide stimulation. Interacts with CLTC; the interaction occurs in response to pathogens. Interacts with AP2A1 and AP2B1. In terms of tissue distribution, expressed in B-cells (at protein level). Expressed in dendritic cells and macrophages.

It is found in the cell membrane. Its subcellular location is the cytoplasm. It localises to the membrane raft. The protein resides in the endosome. The protein localises to the early endosome. Functionally, involved in protein trafficking via association with clathrin and AP2 complex. Upon bacterial lipopolysaccharide stimulation, mediates internalization of TLR4 to endosomes in dendritic cells and macrophages; and internalization of poly(I:C) to TLR3-positive endosomes in myeloid dendritic cells and epithelial cells; resulting in activation of TICAM1-mediated signaling and subsequent IFNB1 production. Involved in T-cell antigen receptor-mediated signaling by regulating tyrosine kinase LCK localization, T-cell dependent antibody production and cytokine secretion. May regulate B-cell antigen receptor-mediated signaling. May play a pivotal role in the formation and/or maintenance of lipid rafts. This chain is Raftlin (RFTN1), found in Homo sapiens (Human).